The chain runs to 118 residues: Cytochrome b-c1 complex subunit 7 (118 aa).

Residues M1–Y32 are igE-binding. Immunodominant epitope; induces specific IgE antibody production in mice. Causes degranulation of rat basophilic leukemia (RBL) cells and the release of beta-hexosaminidase from them.

The protein belongs to the UQCRB/QCR7 family. Component of the ubiquinol-cytochrome c oxidoreductase (cytochrome b-c1 complex, complex III, CIII), a multisubunit enzyme composed of 3 respiratory subunits cytochrome b, cytochrome c1 and Rieske protein, 2 core protein subunits, and additional low-molecular weight protein subunits. The complex exists as an obligatory dimer and forms supercomplexes (SCs) in the inner mitochondrial membrane with cytochrome c oxidase (complex IV, CIV).

Its subcellular location is the mitochondrion inner membrane. In terms of biological role, component of the ubiquinol-cytochrome c oxidoreductase, a multisubunit transmembrane complex that is part of the mitochondrial electron transport chain which drives oxidative phosphorylation. The respiratory chain contains 3 multisubunit complexes succinate dehydrogenase (complex II, CII), ubiquinol-cytochrome c oxidoreductase (cytochrome b-c1 complex, complex III, CIII) and cytochrome c oxidase (complex IV, CIV), that cooperate to transfer electrons derived from NADH and succinate to molecular oxygen, creating an electrochemical gradient over the inner membrane that drives transmembrane transport and the ATP synthase. The cytochrome b-c1 complex catalyzes electron transfer from ubiquinol to cytochrome c, linking this redox reaction to translocation of protons across the mitochondrial inner membrane, with protons being carried across the membrane as hydrogens on the quinol. In the process called Q cycle, 2 protons are consumed from the matrix, 4 protons are released into the intermembrane space and 2 electrons are passed to cytochrome c. This is Cytochrome b-c1 complex subunit 7 from Dermatophagoides pteronyssinus (European house dust mite).